The chain runs to 757 residues: Catalase-peroxidase (757 aa).

The tryptophyl-tyrosyl-methioninium (Trp-Tyr) (with M-274) cross-link spans W101–Y248. The active-site Proton acceptor is the H102. The segment at V213–S232 is disordered. A cross-link (tryptophyl-tyrosyl-methioninium (Tyr-Met) (with W-101)) is located at residues Y248–M274. Residue H289 coordinates heme b.

Belongs to the peroxidase family. Peroxidase/catalase subfamily. As to quaternary structure, homodimer or homotetramer. Requires heme b as cofactor. In terms of processing, formation of the three residue Trp-Tyr-Met cross-link is important for the catalase, but not the peroxidase activity of the enzyme.

The catalysed reaction is H2O2 + AH2 = A + 2 H2O. The enzyme catalyses 2 H2O2 = O2 + 2 H2O. Functionally, bifunctional enzyme with both catalase and broad-spectrum peroxidase activity. The sequence is that of Catalase-peroxidase from Xylella fastidiosa (strain M23).